We begin with the raw amino-acid sequence, 100 residues long: Small ribosomal subunit protein uS14c (100 aa).

This sequence belongs to the universal ribosomal protein uS14 family. Part of the 30S ribosomal subunit.

The protein localises to the plastid. It is found in the chloroplast. Binds 16S rRNA, required for the assembly of 30S particles. The polypeptide is Small ribosomal subunit protein uS14c (Illicium oligandrum (Star anise)).